We begin with the raw amino-acid sequence, 367 residues long: Type II methyltransferase M.CviJI (367 aa).

One can recognise an SAM-dependent MTase C5-type domain in the interval 3–367 (FRTLELFAGI…EYLGYLVQYD (365 aa)). Cys73 is a catalytic residue.

The protein belongs to the class I-like SAM-binding methyltransferase superfamily. C5-methyltransferase family.

The catalysed reaction is a 2'-deoxycytidine in DNA + S-adenosyl-L-methionine = a 5-methyl-2'-deoxycytidine in DNA + S-adenosyl-L-homocysteine + H(+). Functionally, a methylase that recognizes the double-stranded sequence 5'-RGCY-3', methylates C-3 on both strands, and protects the DNA from cleavage by the CviJI endonuclease. The sequence is that of Type II methyltransferase M.CviJI from Chlorella (PBCV-IL3A).